Here is an 856-residue protein sequence, read N- to C-terminus: Leucine--tRNA ligase (856 aa).

The short motif at 53-63 (PYPSGNLHMGH) is the 'HIGH' region element. A 'KMSKS' region motif is present at residues 622-626 (KMSKS). ATP is bound at residue Lys-625.

Belongs to the class-I aminoacyl-tRNA synthetase family.

It is found in the cytoplasm. It carries out the reaction tRNA(Leu) + L-leucine + ATP = L-leucyl-tRNA(Leu) + AMP + diphosphate. The chain is Leucine--tRNA ligase from Prochlorococcus marinus (strain MIT 9301).